A 229-amino-acid polypeptide reads, in one-letter code: DNA mismatch repair protein MutH (229 aa).

It belongs to the MutH family.

The protein resides in the cytoplasm. Its function is as follows. Sequence-specific endonuclease that cleaves unmethylated GATC sequences. It is involved in DNA mismatch repair. In Escherichia coli O127:H6 (strain E2348/69 / EPEC), this protein is DNA mismatch repair protein MutH.